Consider the following 249-residue polypeptide: Probable transcriptional regulatory protein MXAN_4974 (249 aa).

This sequence belongs to the TACO1 family.

The protein localises to the cytoplasm. This Myxococcus xanthus (strain DK1622) protein is Probable transcriptional regulatory protein MXAN_4974.